Consider the following 193-residue polypeptide: Ribonuclease HII (193 aa).

One can recognise an RNase H type-2 domain in the interval 15–193; it reads CIVAGIDEAG…PYHRRSFRCC (179 aa). 3 residues coordinate a divalent metal cation: D21, E22, and D112.

Belongs to the RNase HII family. Requires Mn(2+) as cofactor. It depends on Mg(2+) as a cofactor.

The protein localises to the cytoplasm. It catalyses the reaction Endonucleolytic cleavage to 5'-phosphomonoester.. Functionally, endonuclease that specifically degrades the RNA of RNA-DNA hybrids. The polypeptide is Ribonuclease HII (Rickettsia conorii (strain ATCC VR-613 / Malish 7)).